The chain runs to 518 residues: Arginyl-tRNA--protein transferase 1 (518 aa).

A Phosphoserine modification is found at Ser-169. The segment at 175–203 (EKLGSGEPSHSVKVHTVPKPGKGADLSKP) is disordered.

Belongs to the R-transferase family. In terms of assembly, monomer. Interacts with LIAT1; LIAT1 is not a substrate of ATE1, the interaction takes place in the cytoplasm and seems to increase ATE1 arginyltransferase activity.

It localises to the nucleus. It is found in the cytoplasm. The catalysed reaction is an N-terminal L-alpha-aminoacyl-[protein] + L-arginyl-tRNA(Arg) = an N-terminal L-arginyl-L-aminoacyl-[protein] + tRNA(Arg) + H(+). Involved in the post-translational conjugation of arginine to the N-terminal aspartate or glutamate of a protein. This arginylation is required for degradation of the protein via the ubiquitin pathway. Does not arginylate cysteine residues. The polypeptide is Arginyl-tRNA--protein transferase 1 (Homo sapiens (Human)).